Here is a 100-residue protein sequence, read N- to C-terminus: EKC/KEOPS complex subunit GON7 (100 aa).

The residue at position 1 (methionine 1) is an N-acetylmethionine. Positions 50–100 are disordered; sequence SPVQGEAQDRVAAAPEEALDGDDEDDAEDENNIDNRTNSDGPTAKRPKPPS. Residues 66-81 show a composition bias toward acidic residues; sequence EALDGDDEDDAEDENN.

As to quaternary structure, component of the EKC/KEOPS complex composed of at least GON7, TP53RK, TPRKB, OSGEP and LAGE3; the whole complex dimerizes.

It localises to the nucleus. Component of the EKC/KEOPS complex that is required for the formation of a threonylcarbamoyl group on adenosine at position 37 (t(6)A37) in tRNAs that read codons beginning with adenine. The complex is probably involved in the transfer of the threonylcarbamoyl moiety of threonylcarbamoyl-AMP (TC-AMP) to the N6 group of A37. GON7 plays a supporting role to the catalytic subunit OSGEP in the complex. The polypeptide is EKC/KEOPS complex subunit GON7 (Sus scrofa (Pig)).